The chain runs to 66 residues: Beta-toxin Cb3 (66 aa).

The 66-residue stretch at 1–66 (KEGYIVNYYD…VWPLPNKTCL (66 aa)) folds into the LCN-type CS-alpha/beta domain. Disulfide bonds link Cys-12/Cys-65, Cys-16/Cys-41, Cys-25/Cys-46, and Cys-29/Cys-48.

This sequence belongs to the long (4 C-C) scorpion toxin superfamily. Sodium channel inhibitor family. Beta subfamily. In terms of tissue distribution, expressed by the venom gland.

It is found in the secreted. Beta toxins bind voltage-independently at site-4 of sodium channels (Nav) and reduces peak current and shifts the voltage of activation toward more negative potentials thereby affecting sodium channel activation and promoting spontaneous and repetitive firing. Has an inhibitory effect on voltage-gated sodium channels hNav1.1/SCN1A, hNav1.2/SCN2A, hNav1.4/SCN4A and hNav1.6/SCN8A. Reduces the peak current of hNav1.5/SCN5A but does not shift its voltage of activation. Also affects the inactivation processes of hNav1.1/SCN1A, hNav1.4/SCN4A, hNav1.5/SCN5A and hNav1.6/SCN8A. This toxin is active against mammals and lethal to mice. This chain is Beta-toxin Cb3, found in Centruroides baergi (Scorpion).